Reading from the N-terminus, the 842-residue chain is Follistatin-related protein 4 (842 aa).

A signal peptide spans 1 to 22 (MKPGGFWLHLTLLGASLPAALG). The 55-residue stretch at 81-135 (KTGEPECQCLEACRPSYVPVCGSDGRFYENHCKLHRAACLLGKRITVIHSKDCFL) folds into the Kazal-like domain. Intrachain disulfides connect cysteine 87–cysteine 119, cysteine 93–cysteine 112, and cysteine 101–cysteine 133. The region spanning 174 to 209 (QKRLLVESLFRDLDADGNGHLSSSELAQHVLKKQDL) is the EF-hand domain. Residues aspartate 187, aspartate 189, asparagine 191, histidine 193, and glutamate 198 each coordinate Ca(2+). 2 consecutive Ig-like domains span residues 251–338 (PEDR…LQVN) and 341–426 (PVIR…EDIS). Intrachain disulfides connect cysteine 270/cysteine 321 and cysteine 362/cysteine 413. An N-linked (GlcNAc...) asparagine glycan is attached at asparagine 318.

It is found in the secreted. This Homo sapiens (Human) protein is Follistatin-related protein 4 (FSTL4).